A 184-amino-acid chain; its full sequence is ATP synthase subunit b, chloroplastic (184 aa).

Residues 4 to 24 traverse the membrane as a helical segment; the sequence is IINLVIFSGYWPIAGNFGLNT.

This sequence belongs to the ATPase B chain family. In terms of assembly, F-type ATPases have 2 components, F(1) - the catalytic core - and F(0) - the membrane proton channel. F(1) has five subunits: alpha(3), beta(3), gamma(1), delta(1), epsilon(1). F(0) has four main subunits: a(1), b(1), b'(1) and c(10-14). The alpha and beta chains form an alternating ring which encloses part of the gamma chain. F(1) is attached to F(0) by a central stalk formed by the gamma and epsilon chains, while a peripheral stalk is formed by the delta, b and b' chains.

It localises to the plastid. Its subcellular location is the chloroplast thylakoid membrane. Functionally, f(1)F(0) ATP synthase produces ATP from ADP in the presence of a proton or sodium gradient. F-type ATPases consist of two structural domains, F(1) containing the extramembraneous catalytic core and F(0) containing the membrane proton channel, linked together by a central stalk and a peripheral stalk. During catalysis, ATP synthesis in the catalytic domain of F(1) is coupled via a rotary mechanism of the central stalk subunits to proton translocation. Component of the F(0) channel, it forms part of the peripheral stalk, linking F(1) to F(0). The chain is ATP synthase subunit b, chloroplastic from Physcomitrium patens (Spreading-leaved earth moss).